The sequence spans 346 residues: MRVAVDAMGGDNAPAVEVEGAVVAAREFGIPITLVGDTEKLRLELAKHNVQGLDIAIHHASEVVGMHDAASDAVRRKKDSSIRVAFDLVKSGEAEAVVSAGNSGATMAAGMFVLKRLKGIDRPAIAQIFPTLRGKTLVLDVGGNVDCKPIHLVQFAIMGEVYARHVIGVEQPRIGLLSNGEEDSKGNELTRETNAILKNISFDYEGYVEGRDIFNGMVDVVVCDGFVGNVVLKLSEGLAETVGKMLREEIASSLLSKLGYLFVRKAFKNFKKKVDYAEYGGAPLIGINGVAMICHGGSNVKAIKNAIHFAHEYVRKGVNQRLAEKMETEFTAYMQQFDAVKEAVAG.

The protein belongs to the PlsX family. In terms of assembly, homodimer. Probably interacts with PlsY.

It is found in the cytoplasm. The enzyme catalyses a fatty acyl-[ACP] + phosphate = an acyl phosphate + holo-[ACP]. It participates in lipid metabolism; phospholipid metabolism. Catalyzes the reversible formation of acyl-phosphate (acyl-PO(4)) from acyl-[acyl-carrier-protein] (acyl-ACP). This enzyme utilizes acyl-ACP as fatty acyl donor, but not acyl-CoA. This is Phosphate acyltransferase from Geobacter sulfurreducens (strain ATCC 51573 / DSM 12127 / PCA).